Consider the following 333-residue polypeptide: tRNA N6-adenosine threonylcarbamoyltransferase (333 aa).

Fe cation-binding residues include histidine 111 and histidine 115. Substrate-binding positions include 134-138 (LVSGG), aspartate 167, glycine 180, and asparagine 272. Residue aspartate 300 participates in Fe cation binding.

It belongs to the KAE1 / TsaD family. It depends on Fe(2+) as a cofactor.

It is found in the cytoplasm. It catalyses the reaction L-threonylcarbamoyladenylate + adenosine(37) in tRNA = N(6)-L-threonylcarbamoyladenosine(37) in tRNA + AMP + H(+). Its function is as follows. Required for the formation of a threonylcarbamoyl group on adenosine at position 37 (t(6)A37) in tRNAs that read codons beginning with adenine. Is involved in the transfer of the threonylcarbamoyl moiety of threonylcarbamoyl-AMP (TC-AMP) to the N6 group of A37, together with TsaE and TsaB. TsaD likely plays a direct catalytic role in this reaction. The chain is tRNA N6-adenosine threonylcarbamoyltransferase from Legionella pneumophila (strain Corby).